Here is an 87-residue protein sequence, read N- to C-terminus: Gibberellin-regulated protein 8 (87 aa).

Residues 1-25 (MKLVVVQFFIISLLLTSSFSVLSSA) form the signal peptide.

It belongs to the GASA family. Six disulfide bonds may be present. Expressed in roots and developing seeds.

The protein localises to the secreted. In terms of biological role, gibberellin-regulated protein that may function in hormonal controlled steps of development such as seed germination, flowering and seed maturation. The chain is Gibberellin-regulated protein 8 from Arabidopsis thaliana (Mouse-ear cress).